We begin with the raw amino-acid sequence, 414 residues long: Serine hydroxymethyltransferase (414 aa).

Residues L118 and 122-124 contribute to the (6S)-5,6,7,8-tetrahydrofolate site; that span reads GHL. Residue K227 is modified to N6-(pyridoxal phosphate)lysine. Residues E240 and 350 to 352 each bind (6S)-5,6,7,8-tetrahydrofolate; that span reads SPF.

Belongs to the SHMT family. As to quaternary structure, homodimer. The cofactor is pyridoxal 5'-phosphate.

Its subcellular location is the cytoplasm. It catalyses the reaction (6R)-5,10-methylene-5,6,7,8-tetrahydrofolate + glycine + H2O = (6S)-5,6,7,8-tetrahydrofolate + L-serine. It participates in one-carbon metabolism; tetrahydrofolate interconversion. It functions in the pathway amino-acid biosynthesis; glycine biosynthesis; glycine from L-serine: step 1/1. In terms of biological role, catalyzes the reversible interconversion of serine and glycine with tetrahydrofolate (THF) serving as the one-carbon carrier. This reaction serves as the major source of one-carbon groups required for the biosynthesis of purines, thymidylate, methionine, and other important biomolecules. Also exhibits THF-independent aldolase activity toward beta-hydroxyamino acids, producing glycine and aldehydes, via a retro-aldol mechanism. The polypeptide is Serine hydroxymethyltransferase (Bacillus thuringiensis (strain Al Hakam)).